Reading from the N-terminus, the 420-residue chain is MCCFLLVSVLLATTLTDVASAQRWRQTSGGGKDRWDGLLDPLDADLRRDIIRYGELAQATSDALIGDPASPFAGASRYAPDAFLRKVRASDPDAYRVTRFVYATSSVRLPDAFMPRPAPSAGAAWSGESNWMGYVAVAADGVAAKAGRRDIVVAWRGTKRAVEWANDLDITLVPADGVVGPGPGWTQPSVHRGFLSVYTSKSFSSPFNKLSAREQVLAEITRLLRAYKNENCSITITGHSLGAALSTLNAIDIVANGYNVRGSSRVPVPVTAIALASPRVGDDQFKRAFDSTSNLSLLRVRNAPDIVPTILPSAFFKDVGAELLVDTRRSPYLKNPAGPAQWHNLECYLHAVAGTQGAGDGAGFSLVVDRDLALVNKEVDALRDEYQVPAAWWVEKNKGMVQNASGRWVLQDHEEGNLAM.

Residues 1–21 (MCCFLLVSVLLATTLTDVASA) form the signal peptide. N-linked (GlcNAc...) asparagine glycosylation is present at Asn231. The active-site Acyl-ester intermediate is the Ser240. Ser240 acts as the Charge relay system in catalysis. Asn294 carries N-linked (GlcNAc...) asparagine glycosylation. Residues Asp305 and His343 each act as charge relay system in the active site. The stretch at 367 to 388 (VVDRDLALVNKEVDALRDEYQV) forms a coiled coil. The N-linked (GlcNAc...) asparagine glycan is linked to Asn403.

Belongs to the AB hydrolase superfamily. Lipase family.

It is found in the secreted. Its function is as follows. Acylhydrolase that catalyzes the hydrolysis of phospholipids at the sn-1 position. The sequence is that of Phospholipase A1-II 3 from Oryza sativa subsp. japonica (Rice).